We begin with the raw amino-acid sequence, 132 residues long: Small ribosomal subunit protein uS8c (132 aa).

Belongs to the universal ribosomal protein uS8 family. In terms of assembly, part of the 30S ribosomal subunit.

The protein localises to the plastid. Its subcellular location is the chloroplast. Functionally, one of the primary rRNA binding proteins, it binds directly to 16S rRNA central domain where it helps coordinate assembly of the platform of the 30S subunit. The sequence is that of Small ribosomal subunit protein uS8c (rps8) from Huperzia lucidula (Shining clubmoss).